We begin with the raw amino-acid sequence, 424 residues long: MTRTLLTDIAVATADHSKYGEEVLGLFRFKDETAFFEKASKIFPGVVLLETCNRVEILVHGSAKQLRDFLHGEQRFGFDILEGEAALMHLLELAAGTKSMIIGEDQILGQMRRALLLAESHDTNDVITDVCLNTAIREGVSIRQKTSINKGAVSIGSAAVLLAEELMGDLDGKNILVVGGGEMGTLVARALCEKNLRAIYVTNRSFDRAVLLAEEIKGRAMRLDQLYPCIALSDVVISCTGAPHLIIHADELAETMNERFWPLDLEPRHLLLIDIAQPRDIDDACRDVPGVSLKTLDDLKSISEKNLAARKTECEHADVLVKAALPEFIKAFNRAASGDLTKNLYTWAEEIRQREKNKALSRLRDADPYLESVIDDLTSALTKKLLEDAAKSIRASAECTDTQTAEILLKAIISGEVSCIRRSE.

Substrate-binding positions include T51 to R54, S99, E104 to Q106, and Q110. C52 serves as the catalytic Nucleophile. G179 to G184 lines the NADP(+) pocket.

This sequence belongs to the glutamyl-tRNA reductase family. As to quaternary structure, homodimer.

It catalyses the reaction (S)-4-amino-5-oxopentanoate + tRNA(Glu) + NADP(+) = L-glutamyl-tRNA(Glu) + NADPH + H(+). It functions in the pathway porphyrin-containing compound metabolism; protoporphyrin-IX biosynthesis; 5-aminolevulinate from L-glutamyl-tRNA(Glu): step 1/2. Functionally, catalyzes the NADPH-dependent reduction of glutamyl-tRNA(Glu) to glutamate 1-semialdehyde (GSA). This Methanocorpusculum labreanum (strain ATCC 43576 / DSM 4855 / Z) protein is Glutamyl-tRNA reductase.